Reading from the N-terminus, the 178-residue chain is dCTP deaminase (178 aa).

Residues 99-104 and Asp-115 contribute to the dCTP site; that span reads RSTWAR. Glu-125 functions as the Proton donor/acceptor in the catalytic mechanism. Residues Tyr-157 and Gln-164 each contribute to the dCTP site.

The protein belongs to the dCTP deaminase family. Homotrimer.

It carries out the reaction dCTP + H2O + H(+) = dUTP + NH4(+). Its pathway is pyrimidine metabolism; dUMP biosynthesis; dUMP from dCTP (dUTP route): step 1/2. Functionally, catalyzes the deamination of dCTP to dUTP. This is dCTP deaminase from Aeropyrum pernix (strain ATCC 700893 / DSM 11879 / JCM 9820 / NBRC 100138 / K1).